Reading from the N-terminus, the 282-residue chain is Undecaprenyl-diphosphatase (282 aa).

Transmembrane regions (helical) follow at residues 39-59, 85-105, 115-135, 153-173, 196-216, 230-250, and 260-280; these read PGAAFTAIVQMGTLAAVLIYF, ATMGWMIAAGTIPIVFFGLLF, SLYWISAALIGLALILWLTEV, IGWKEALLIGVAQSIALIPGS, FSFLLSLPSVLAAALLQLYET, LLVATIAAGVVGYASIAFLIT, and FIIYRIVIGVAILGLIATGAI.

This sequence belongs to the UppP family.

It localises to the cell inner membrane. It catalyses the reaction di-trans,octa-cis-undecaprenyl diphosphate + H2O = di-trans,octa-cis-undecaprenyl phosphate + phosphate + H(+). Its function is as follows. Catalyzes the dephosphorylation of undecaprenyl diphosphate (UPP). Confers resistance to bacitracin. This chain is Undecaprenyl-diphosphatase, found in Chlorobium chlorochromatii (strain CaD3).